A 211-amino-acid chain; its full sequence is NADH-quinone oxidoreductase subunit I (211 aa).

Positions 1–27 (MANTDRPALPHKRAVPPSRADSGPRRR) are disordered. 2 4Fe-4S ferredoxin-type domains span residues 71–101 (LNRY…VEGA) and 117–146 (RVYQ…MTYD). Cys81, Cys84, Cys87, Cys91, Cys126, Cys129, Cys132, and Cys136 together coordinate [4Fe-4S] cluster.

Belongs to the complex I 23 kDa subunit family. As to quaternary structure, NDH-1 is composed of 14 different subunits. Subunits NuoA, H, J, K, L, M, N constitute the membrane sector of the complex. [4Fe-4S] cluster is required as a cofactor.

Its subcellular location is the cell membrane. The enzyme catalyses a quinone + NADH + 5 H(+)(in) = a quinol + NAD(+) + 4 H(+)(out). Functionally, NDH-1 shuttles electrons from NADH, via FMN and iron-sulfur (Fe-S) centers, to quinones in the respiratory chain. The immediate electron acceptor for the enzyme in this species is believed to be menaquinone. Couples the redox reaction to proton translocation (for every two electrons transferred, four hydrogen ions are translocated across the cytoplasmic membrane), and thus conserves the redox energy in a proton gradient. The sequence is that of NADH-quinone oxidoreductase subunit I from Mycobacterium tuberculosis (strain ATCC 25177 / H37Ra).